The primary structure comprises 272 residues: Protein UL11 (272 aa).

Residues 1–31 form the signal peptide; it reads MLFRYITFHREKVLYLTAACIFGVYISLHDA. Topologically, residues 32–224 are extracellular; that stretch reads CIPVVGKIGT…PLQPSPQHQH (193 aa). Residues Asn42, Asn93, Asn100, and Asn142 are each glycosylated (N-linked (GlcNAc...) asparagine; by host). The tract at residues 142-200 is disordered; it reads NGTFPTTTTKKPTTTTRTTTTTTQRTTTTRTTTTAKKTTISTTHHKHPSPKKSTTPNSH. Over residues 147 to 183 the composition is skewed to low complexity; that stretch reads TTTTKKPTTTTRTTTTTTQRTTTTRTTTTAKKTTIST. Residues 225-245 form a helical membrane-spanning segment; sequence LATHALWVLAVVIVIIIIIIF. Residues 246–272 lie on the Cytoplasmic side of the membrane; that stretch reads YFRIPQKLWLLWQHDKHGIVLIPQTDL.

The protein belongs to the RL11 family. As to quaternary structure, interacts with host PTPRC; this interaction affects T-cell signaling. Glycosylated.

It is found in the host cell membrane. It localises to the host endoplasmic reticulum. In terms of biological role, plays a role in the modulation of host immune response by modulating T-cell function. Interacts with host PTPRC/CD45 and thereby reduces host TCR signaling and T-cell proliferation. The protein is Protein UL11 (UL11) of Human cytomegalovirus (strain Merlin) (HHV-5).